Reading from the N-terminus, the 526-residue chain is Na(+)/H(+) antiporter NhaB (526 aa).

Transmembrane regions (helical) follow at residues 25 to 45 (ILLFLLINPIAFYLDPFIAGW), 52 to 72 (IFTLAMALKCYPLQPGGLLAI), 89 to 109 (LVANIEVLLLLVFMVAGIYFM), 130 to 164 (LSLAFCLVSAFLSAFLDALTVIAVVISVATGFYAI), 204 to 224 (LMMHAAIGTALGGVCTLVGEP), 242 to 262 (IRMSPVTVPVFICGLLTCVLV), 307 to 327 (IALWLILGLAMHLAAVGLIGL), 350 to 370 (QEALPFTALLAVFFSVVAVII), 391 to 411 (LALFYLANGLLSMVSDNVFVG), 448 to 468 (VATPNGQAAFLFMLTSALAPL), 479 to 499 (MALPYTLVLGLVGFFSVEMLL), and 505 to 525 (WFYQAGWLVLDNVAPAALPVL).

This sequence belongs to the NhaB Na(+)/H(+) (TC 2.A.34) antiporter family.

The protein localises to the cell inner membrane. The catalysed reaction is 2 Na(+)(in) + 3 H(+)(out) = 2 Na(+)(out) + 3 H(+)(in). In terms of biological role, na(+)/H(+) antiporter that extrudes sodium in exchange for external protons. This is Na(+)/H(+) antiporter NhaB from Aeromonas hydrophila subsp. hydrophila (strain ATCC 7966 / DSM 30187 / BCRC 13018 / CCUG 14551 / JCM 1027 / KCTC 2358 / NCIMB 9240 / NCTC 8049).